The chain runs to 352 residues: N-acetyl-gamma-glutamyl-phosphate reductase (352 aa).

The active site involves Cys149.

This sequence belongs to the NAGSA dehydrogenase family. Type 1 subfamily.

Its subcellular location is the cytoplasm. The enzyme catalyses N-acetyl-L-glutamate 5-semialdehyde + phosphate + NADP(+) = N-acetyl-L-glutamyl 5-phosphate + NADPH + H(+). It participates in amino-acid biosynthesis; L-arginine biosynthesis; N(2)-acetyl-L-ornithine from L-glutamate: step 3/4. Catalyzes the NADPH-dependent reduction of N-acetyl-5-glutamyl phosphate to yield N-acetyl-L-glutamate 5-semialdehyde. The sequence is that of N-acetyl-gamma-glutamyl-phosphate reductase from Polynucleobacter asymbioticus (strain DSM 18221 / CIP 109841 / QLW-P1DMWA-1) (Polynucleobacter necessarius subsp. asymbioticus).